The following is a 179-amino-acid chain: Large ribosomal subunit protein uL5 (179 aa).

It belongs to the universal ribosomal protein uL5 family. In terms of assembly, part of the 50S ribosomal subunit; part of the 5S rRNA/L5/L18/L25 subcomplex. Contacts the 5S rRNA and the P site tRNA. Forms a bridge to the 30S subunit in the 70S ribosome.

In terms of biological role, this is one of the proteins that bind and probably mediate the attachment of the 5S RNA into the large ribosomal subunit, where it forms part of the central protuberance. In the 70S ribosome it contacts protein S13 of the 30S subunit (bridge B1b), connecting the 2 subunits; this bridge is implicated in subunit movement. Contacts the P site tRNA; the 5S rRNA and some of its associated proteins might help stabilize positioning of ribosome-bound tRNAs. The sequence is that of Large ribosomal subunit protein uL5 from Bordetella bronchiseptica (strain ATCC BAA-588 / NCTC 13252 / RB50) (Alcaligenes bronchisepticus).